Here is a 255-residue protein sequence, read N- to C-terminus: RNA polymerase sigma-F factor (255 aa).

A Polymerase core binding motif is present at residues 61–74 (DLFQIGCIGLLKSV). The H-T-H motif DNA-binding region spans 221 to 240 (QSEVADRLGISQVQVSRLEK).

Belongs to the sigma-70 factor family.

Functionally, sigma factors are initiation factors that promote the attachment of RNA polymerase to specific initiation sites and are then released. This sigma factor is responsible for the expression of sporulation specific genes. This is RNA polymerase sigma-F factor (sigF) from Bacillus licheniformis.